We begin with the raw amino-acid sequence, 712 residues long: DNA topoisomerase 3 (712 aa).

One can recognise a Toprim domain in the interval 2-135; the sequence is KSLIIAEKPS…TKRLWISSVT (134 aa). Positions 8 and 104 each coordinate Mg(2+). Residues 152-581 enclose the Topo IA-type catalytic domain; sequence FNNLYHAALA…EMKAFTNQVV (430 aa). The interval 186–191 is interaction with DNA; the sequence is SLGRVQ. Tyrosine 305 serves as the catalytic O-(5'-phospho-DNA)-tyrosine intermediate.

The protein belongs to the type IA topoisomerase family. Mg(2+) serves as cofactor.

It carries out the reaction ATP-independent breakage of single-stranded DNA, followed by passage and rejoining.. Releases the supercoiling and torsional tension of DNA, which is introduced during the DNA replication and transcription, by transiently cleaving and rejoining one strand of the DNA duplex. Introduces a single-strand break via transesterification at a target site in duplex DNA. The scissile phosphodiester is attacked by the catalytic tyrosine of the enzyme, resulting in the formation of a DNA-(5'-phosphotyrosyl)-enzyme intermediate and the expulsion of a 3'-OH DNA strand. The free DNA strand then undergoes passage around the unbroken strand, thus removing DNA supercoils. Finally, in the religation step, the DNA 3'-OH attacks the covalent intermediate to expel the active-site tyrosine and restore the DNA phosphodiester backbone. In Staphylococcus saprophyticus subsp. saprophyticus (strain ATCC 15305 / DSM 20229 / NCIMB 8711 / NCTC 7292 / S-41), this protein is DNA topoisomerase 3.